The sequence spans 359 residues: Phospho-N-acetylmuramoyl-pentapeptide-transferase (359 aa).

Helical transmembrane passes span 3–23 (QILFAAGIALAVSILLTPVLI), 53–73 (GGVAILAGLWAGYWGSHLIGI), 84–104 (GLLVLGLTTALGGVGFLDDFI), 117–137 (TAKLVGQLIAAVAFGILALQF), 156–176 (IATVTMGSVVFVAFCYLLVSA), 187–207 (LDGLAAGSMSLVLGAYVIITF), 231–251 (LALICAAGAGACIGFLWWNAA), 255–275 (IFMGDTGSLALGGMLAGLSIT), 283–303 (VVIGALFVAEAASVVIQVAVF), and 330–350 (VIIRFWLLAAIASAIGLALFY).

This sequence belongs to the glycosyltransferase 4 family. MraY subfamily. The cofactor is Mg(2+).

It localises to the cell membrane. It catalyses the reaction UDP-N-acetyl-alpha-D-muramoyl-L-alanyl-gamma-D-glutamyl-meso-2,6-diaminopimeloyl-D-alanyl-D-alanine + di-trans,octa-cis-undecaprenyl phosphate = di-trans,octa-cis-undecaprenyl diphospho-N-acetyl-alpha-D-muramoyl-L-alanyl-D-glutamyl-meso-2,6-diaminopimeloyl-D-alanyl-D-alanine + UMP. The protein operates within cell wall biogenesis; peptidoglycan biosynthesis. Functionally, catalyzes the initial step of the lipid cycle reactions in the biosynthesis of the cell wall peptidoglycan: transfers peptidoglycan precursor phospho-MurNAc-pentapeptide from UDP-MurNAc-pentapeptide onto the lipid carrier undecaprenyl phosphate, yielding undecaprenyl-pyrophosphoryl-MurNAc-pentapeptide, known as lipid I. This Rhodococcus jostii (strain RHA1) protein is Phospho-N-acetylmuramoyl-pentapeptide-transferase.